The following is a 164-amino-acid chain: Peptide deformylase-like (164 aa).

The active site involves E134.

It belongs to the polypeptide deformylase family.

In Brucella melitensis biotype 1 (strain ATCC 23456 / CCUG 17765 / NCTC 10094 / 16M), this protein is Peptide deformylase-like.